The primary structure comprises 1227 residues: ATP-dependent helicase/nuclease subunit A (1227 aa).

In terms of domain architecture, UvrD-like helicase ATP-binding spans 3 to 477 (VKYTPDQARA…IIFAENFRSS (475 aa)). 24–31 (ASAGSGKT) contributes to the ATP binding site. The UvrD-like helicase C-terminal domain occupies 505–788 (GQLKFAAGYD…KLMTIHASKG (284 aa)).

It belongs to the helicase family. AddA subfamily. Heterodimer of AddA and AddB/RexB. Mg(2+) is required as a cofactor.

It carries out the reaction Couples ATP hydrolysis with the unwinding of duplex DNA by translocating in the 3'-5' direction.. The enzyme catalyses ATP + H2O = ADP + phosphate + H(+). In terms of biological role, the heterodimer acts as both an ATP-dependent DNA helicase and an ATP-dependent, dual-direction single-stranded exonuclease. Recognizes the chi site generating a DNA molecule suitable for the initiation of homologous recombination. The AddA nuclease domain is required for chi fragment generation; this subunit has the helicase and 3' -&gt; 5' nuclease activities. The sequence is that of ATP-dependent helicase/nuclease subunit A from Lactobacillus delbrueckii subsp. bulgaricus (strain ATCC 11842 / DSM 20081 / BCRC 10696 / JCM 1002 / NBRC 13953 / NCIMB 11778 / NCTC 12712 / WDCM 00102 / Lb 14).